The chain runs to 217 residues: Pyrophosphatase PpaX (217 aa).

The active-site Nucleophile is the Asp11.

This sequence belongs to the HAD-like hydrolase superfamily. PpaX family. Mg(2+) is required as a cofactor.

It catalyses the reaction diphosphate + H2O = 2 phosphate + H(+). Its function is as follows. Hydrolyzes pyrophosphate formed during P-Ser-HPr dephosphorylation by HPrK/P. Might play a role in controlling the intracellular pyrophosphate pool. This chain is Pyrophosphatase PpaX, found in Listeria monocytogenes serotype 4a (strain HCC23).